The sequence spans 240 residues: NKG2-E type II integral membrane protein (240 aa).

Positions 1–12 are enriched in polar residues; the sequence is MSKQRGTFSEVS. The disordered stretch occupies residues 1–31; the sequence is MSKQRGTFSEVSLAQDPKWQQRKPKGNKSSI. At 1 to 70 the chain is on the cytoplasmic side; that stretch reads MSKQRGTFSE…CQGLLPPPEK (70 aa). Residues 71-93 form a helical; Signal-anchor for type II membrane protein membrane-spanning segment; the sequence is LTAEVLGIICIVLMATVLKTIVL. Topologically, residues 94–240 are extracellular; that stretch reads IPFLEQNNSS…IMLTRLVLNS (147 aa). Asparagine 100 carries an N-linked (GlcNAc...) asparagine glycan. One can recognise a C-type lectin domain in the interval 116-230; that stretch reads HCPEEWITYS…GSSRIIRRGF (115 aa). Cysteines 117 and 128 form a disulfide. N-linked (GlcNAc...) asparagine glycans are attached at residues asparagine 149 and asparagine 179. Cysteine 207 and cysteine 220 are oxidised to a cystine.

Can form disulfide-bonded heterodimer with CD94. In terms of tissue distribution, natural killer cells.

It localises to the membrane. Functionally, plays a role as a receptor for the recognition of MHC class I HLA-E molecules by NK cells and some cytotoxic T-cells. The sequence is that of NKG2-E type II integral membrane protein (KLRC3) from Homo sapiens (Human).